Here is a 4467-residue protein sequence, read N- to C-terminus: Protocadherin-like protein (4467 aa).

A signal peptide spans 1-22 (MRGINAIVGFLLCFCLLHRINT). Cadherin domains lie at 23–128 (AVQF…SPTF), 129–238 (PQHL…SPVF), 239–350 (EKKS…VPVF), 351–455 (QEES…TPVF), 459–566 (NPQQ…NPDF), 567–664 (SKVV…PPTF), 665–764 (KNAP…PPTF), 765–884 (SRSS…SPEF), 885–994 (SQTS…PPLF), 1092–1197 (EAQP…QPRF), 1290–1395 (SRTV…SPKF), 1396–1499 (SADS…PPKF), 1495–1597 (GPPK…EPQF), 1601–1701 (SNGF…QPVR), 1793–1891 (TMID…KPQF), 1892–1992 (SESA…YPKF), 1993–2100 (EPNL…KPQF), 2101–2202 (LESD…RPVF), 2203–2312 (TDCP…FPFF), 2313–2423 (LTRT…PPAF), 2425–2529 (PSAV…TPTF), 2530–2639 (KLEE…PPIF), 2640–2746 (PKPS…IPKF), 2747–2849 (DNLI…SPYF), 2850–2954 (PNPP…APVF), 2955–3062 (NPRE…PPVF), 3063–3170 (VPAE…GPWF), and 3173–3288 (RYYE…EPFD). Over 23–4258 (AVQFKQEILE…RPSSRWANPA (4236 aa)) the chain is Extracellular. The 39-residue stretch at 3551–3589 (PDINCTTGTPCLHGGTCHNAVPKGIICECGRDYLGPECQ) folds into the EGF-like 1 domain. Disulfide bonds link Cys-3555-Cys-3567, Cys-3561-Cys-3577, Cys-3579-Cys-3588, Cys-3762-Cys-3788, Cys-3794-Cys-3803, Cys-3797-Cys-3812, and Cys-3814-Cys-3823. Residues 3590–3788 (STTRTFRGNS…LKEVNTELGC (199 aa)) form the Laminin G-like 1 domain. The region spanning 3790–3824 (LNNQCPNCNGRGYCEPFWNYAICVCDLGFGGANCD) is the EGF-like 2 domain. Positions 3842–4096 (VKQVKRKRRE…KVIISSSGGS (255 aa)) constitute a Laminin G-like 2 domain. A disordered region spans residues 4089-4118 (IISSSGGSVSGGSGGASGGSGGASGSGGSV). Over residues 4096–4118 (SVSGGSGGASGGSGGASGSGGSV) the composition is skewed to gly residues. Residues 4206-4238 (PCGSNFCRHGGTCVSADPPYCLCPVGWSGPVCE) enclose the EGF-like 3 domain. 3 cysteine pairs are disulfide-bonded: Cys-4207–Cys-4218, Cys-4212–Cys-4226, and Cys-4228–Cys-4237. A helical membrane pass occupies residues 4259 to 4279 (VIACILVILLAILVIIGAVLL). Residues 4280 to 4467 (KRRPQPAVVA…NLNRIFNEDE (188 aa)) are Cytoplasmic-facing. Residues 4424–4445 (DVDDLSELGDSDEEPDEEEEQE) are disordered.

As to expression, component of the acid-insoluble organic matrix of the aragonitic skeleton (at protein level).

It localises to the membrane. The sequence is that of Protocadherin-like protein from Acropora millepora (Staghorn coral).